The following is a 165-amino-acid chain: Transcriptional repressor NrdR (165 aa).

A zinc finger spans residues 3 to 34 (CPFCRHPDSRVVDSREADEGQAIRRRRSCPEC). Residues 46–136 (LSVVKRSGVT…VYKSFSSAAD (91 aa)) form the ATP-cone domain.

Belongs to the NrdR family. The cofactor is Zn(2+).

In terms of biological role, negatively regulates transcription of bacterial ribonucleotide reductase nrd genes and operons by binding to NrdR-boxes. This is Transcriptional repressor NrdR from Rhodococcus erythropolis (strain PR4 / NBRC 100887).